Reading from the N-terminus, the 322-residue chain is tRNA U34 carboxymethyltransferase (322 aa).

Carboxy-S-adenosyl-L-methionine is bound by residues Lys92, Trp106, Lys111, Gly131, 153 to 155, 181 to 182, Met196, Tyr200, and Arg315; these read DPS and VE.

It belongs to the class I-like SAM-binding methyltransferase superfamily. CmoB family. In terms of assembly, homotetramer.

The catalysed reaction is carboxy-S-adenosyl-L-methionine + 5-hydroxyuridine(34) in tRNA = 5-carboxymethoxyuridine(34) in tRNA + S-adenosyl-L-homocysteine + H(+). Functionally, catalyzes carboxymethyl transfer from carboxy-S-adenosyl-L-methionine (Cx-SAM) to 5-hydroxyuridine (ho5U) to form 5-carboxymethoxyuridine (cmo5U) at position 34 in tRNAs. The chain is tRNA U34 carboxymethyltransferase from Pseudoalteromonas translucida (strain TAC 125).